Here is a 244-residue protein sequence, read N- to C-terminus: Ethylene-responsive transcription factor 1 (244 aa).

Positions 106 to 164 form a DNA-binding region, AP2/ERF; that stretch reads HYRGVRQRPWGKFAAEIRDPAKNGARVWLGTYESAEEAALAYGKAAFRMRGTKALLNFP. Positions 186–198 are enriched in low complexity; that stretch reads SASSSVSSASESG. Residues 186-214 form a disordered region; that stretch reads SASSSVSSASESGSPKRRRKGVAAKQAEL.

This sequence belongs to the ethylene-response factor family. Class 1 subfamily. As to expression, present in stems.

The protein resides in the nucleus. Involved in the regulation of gene expression during fruit ripening, by stress factors and by components of stress signal transduction pathways. Transcription factor that binds to the GCC-box pathogenesis-related promoter element. Probably acts as a transcriptional activator and may be involved in disease resistance pathways. This is Ethylene-responsive transcription factor 1 (ERF1) from Solanum lycopersicum (Tomato).